A 289-amino-acid chain; its full sequence is MRQFEVNILGCGSALPATRHSLSSQIVNLNGELYMIDCGEGSQLQFRAMNLKFQRLNHIFISHLHGDHCFGLLGLVSMFVLLGRTVDLCIYSHPDTKCLFQPLIKYFFKELPFQVVFHPFDPTCSGLIFEDQVLRVFTIPLKHRVPTVGFLFEEKPIYLFDNNMQRGNFVTSGSQTVSSSCLSKLASFSCRYAYCSDTVYYEEIIPLITGVDLLYHEATYSNKDLARAKETYHSSAQQASLIARAANVKKLMLGHFSARYPDETFLLKEAQKIFPNTILASERMILPII.

Histidine 63, histidine 65, aspartate 67, histidine 68, histidine 143, aspartate 197, and histidine 255 together coordinate Zn(2+). Aspartate 67 (proton acceptor) is an active-site residue.

Belongs to the RNase Z family. As to quaternary structure, homodimer. Zn(2+) serves as cofactor.

It carries out the reaction Endonucleolytic cleavage of RNA, removing extra 3' nucleotides from tRNA precursor, generating 3' termini of tRNAs. A 3'-hydroxy group is left at the tRNA terminus and a 5'-phosphoryl group is left at the trailer molecule.. Its function is as follows. Zinc phosphodiesterase, which displays some tRNA 3'-processing endonuclease activity. Probably involved in tRNA maturation, by removing a 3'-trailer from precursor tRNA. This chain is Ribonuclease Z, found in Azobacteroides pseudotrichonymphae genomovar. CFP2.